The sequence spans 224 residues: MSHTEVKLKVPFGNKLLDAVCLVPNKSLTYGVILTHGASGDMNLPHLTSLASHLASHGFFCLRFTCKGLNIVHRIKAYKSVLNYLKTSEYKLAGVFLGGRSMGSRAAASVLCHIEPDDADDFVRGLICISYPLHHPKQQHKLRDEDLFRIKDPVLFVSGSADEMCEKNLLEKVAQKMQAPHKIHWIEKANHSMAVKGRSTNDVFKEINTQILFWIQEITETDKK.

This chain is Testis-expressed protein 30 (TEX30), found in Bos taurus (Bovine).